The sequence spans 374 residues: Guanine nucleotide-binding protein subunit alpha-15 (374 aa).

The G-alpha domain occupies 41 to 374 (GELKLLLLGP…ARYLDEINLL (334 aa)). A G1 motif region spans residues 44–57 (KLLLLGPGESGKST). GTP-binding positions include 49–56 (GPGESGKS), 183–189 (LRSRMPT), 208–212 (DAGGQ), 277–280 (NKTD), and A346. 2 residues coordinate Mg(2+): S56 and T189. The G2 motif stretch occupies residues 181–189 (DVLRSRMPT). The G3 motif stretch occupies residues 204–213 (LRIVDAGGQK). The tract at residues 273-280 (ILFLNKTD) is G4 motif. Positions 344-349 (TCATDT) are G5 motif.

Belongs to the G-alpha family. G(q) subfamily. As to quaternary structure, g proteins are composed of 3 units; alpha, beta and gamma. The alpha chain contains the guanine nucleotide binding site.

Its function is as follows. Guanine nucleotide-binding proteins (G proteins) are involved as modulators or transducers in various transmembrane signaling systems. In Rattus norvegicus (Rat), this protein is Guanine nucleotide-binding protein subunit alpha-15 (Gna15).